We begin with the raw amino-acid sequence, 326 residues long: Glyoxylate/hydroxypyruvate reductase B (326 aa).

Residues R237 and E266 contribute to the active site. H285 (proton donor) is an active-site residue.

This sequence belongs to the D-isomer specific 2-hydroxyacid dehydrogenase family. GhrB subfamily. As to quaternary structure, homodimer.

Its subcellular location is the cytoplasm. It catalyses the reaction glycolate + NADP(+) = glyoxylate + NADPH + H(+). The catalysed reaction is (R)-glycerate + NAD(+) = 3-hydroxypyruvate + NADH + H(+). It carries out the reaction (R)-glycerate + NADP(+) = 3-hydroxypyruvate + NADPH + H(+). In terms of biological role, catalyzes the NADPH-dependent reduction of glyoxylate and hydroxypyruvate into glycolate and glycerate, respectively. This chain is Glyoxylate/hydroxypyruvate reductase B, found in Yersinia pseudotuberculosis serotype O:1b (strain IP 31758).